Consider the following 752-residue polypeptide: Protein GCN20 (752 aa).

The residue at position 2 (Ala2) is an N-acetylalanine. ABC transporter domains lie at 199 to 464 and 532 to 748; these read IHID…RKNA and IQLQ…AAGV. ATP contacts are provided by residues 232 to 239 and 565 to 572; these read GQNGIGKS and GANGCGKT.

It belongs to the ABC transporter superfamily. ABCF family. EF3 subfamily. In terms of assembly, interacts (via N-terminus) with GCN1 (via C-terminus); this interaction stimulates GCN2 kinase activity in response to amino acid starvation. The GCN1-GCN20 complex interacts with GCN2 on translating ribosomes in amino acid-starved cells; this association stimulates GCN2 kinase activation by uncharged tRNAs, and hence allowing GCN4 translational activation and derepression of amino acid biosynthetic genes. Associates with ribosomes.

Acts as a positive activator of the GCN2 protein kinase activity in response to in response to low amino acid, carbon, or purine availability. Component of the GCN1-GCN20 complex that forms a complex with GCN2 on translating ribosomes; during this process, GCN20 helps GCN1 to act as a chaperone to facilitate delivery of uncharged tRNAs that enter the A site of ribosomes to the tRNA-binding domain of GCN2, and hence stimulating GCN2 kinase activity. Participates in gene-specific mRNA translation activation, such as the transcriptional activator GCN4, by promoting the GCN2-mediated phosphorylation of eukaryotic translation initiation factor 2 (eIF-2-alpha/SUI2) on 'Ser-52', and hence allowing GCN4-mediated reprogramming of amino acid biosynthetic gene expression to alleviate nutrient depletion. The polypeptide is Protein GCN20 (Saccharomyces cerevisiae (strain ATCC 204508 / S288c) (Baker's yeast)).